We begin with the raw amino-acid sequence, 423 residues long: 3-phosphoshikimate 1-carboxyvinyltransferase (423 aa).

3 residues coordinate 3-phosphoshikimate: Lys-28, Ser-29, and Arg-33. Lys-28 is a binding site for phosphoenolpyruvate. Residues Gly-96 and Arg-124 each coordinate phosphoenolpyruvate. The 3-phosphoshikimate site is built by Ser-169, Ser-170, Gln-171, Ser-198, Glu-312, and His-339. Gln-171 provides a ligand contact to phosphoenolpyruvate. Residue Glu-312 is the Proton acceptor of the active site. Residues Arg-343, Arg-384, and Lys-409 each contribute to the phosphoenolpyruvate site.

Belongs to the EPSP synthase family. Monomer.

Its subcellular location is the cytoplasm. The enzyme catalyses 3-phosphoshikimate + phosphoenolpyruvate = 5-O-(1-carboxyvinyl)-3-phosphoshikimate + phosphate. Its pathway is metabolic intermediate biosynthesis; chorismate biosynthesis; chorismate from D-erythrose 4-phosphate and phosphoenolpyruvate: step 6/7. Functionally, catalyzes the transfer of the enolpyruvyl moiety of phosphoenolpyruvate (PEP) to the 5-hydroxyl of shikimate-3-phosphate (S3P) to produce enolpyruvyl shikimate-3-phosphate and inorganic phosphate. The polypeptide is 3-phosphoshikimate 1-carboxyvinyltransferase (Acidothermus cellulolyticus (strain ATCC 43068 / DSM 8971 / 11B)).